Reading from the N-terminus, the 355-residue chain is Uroporphyrinogen decarboxylase (355 aa).

Substrate is bound by residues Arg36–Arg40, Asp85, Tyr160, Ser215, and His334.

Belongs to the uroporphyrinogen decarboxylase family. In terms of assembly, homodimer.

The protein resides in the cytoplasm. The catalysed reaction is uroporphyrinogen III + 4 H(+) = coproporphyrinogen III + 4 CO2. It participates in porphyrin-containing compound metabolism; protoporphyrin-IX biosynthesis; coproporphyrinogen-III from 5-aminolevulinate: step 4/4. Catalyzes the decarboxylation of four acetate groups of uroporphyrinogen-III to yield coproporphyrinogen-III. The sequence is that of Uroporphyrinogen decarboxylase from Rhodococcus opacus (strain B4).